Here is a 297-residue protein sequence, read N- to C-terminus: Protein MIZU-KUSSEI 1 (297 aa).

Expressed in root meristematic region, cortical cells, lateral root cap cells, columella cells of the root cap, mature region of the roots and leaf hydathodes.

The protein resides in the endoplasmic reticulum membrane. In terms of biological role, plays a role in lateral root development by maintaining auxin levels. This function requires GNOM (GN/MIZ2) activity. Negatively regulates cytokinin sensitivity on root development. Positively regulates hydrotropism in roots. The polypeptide is Protein MIZU-KUSSEI 1 (MIZ1) (Arabidopsis thaliana (Mouse-ear cress)).